The following is a 148-amino-acid chain: Endoribonuclease YbeY (148 aa).

Zn(2+)-binding residues include His105, His109, and Asp115.

The protein belongs to the endoribonuclease YbeY family. Zn(2+) is required as a cofactor.

It localises to the cytoplasm. Functionally, single strand-specific metallo-endoribonuclease involved in late-stage 70S ribosome quality control and in maturation of the 3' terminus of the 16S rRNA. The polypeptide is Endoribonuclease YbeY (Chlorobium phaeovibrioides (strain DSM 265 / 1930) (Prosthecochloris vibrioformis (strain DSM 265))).